We begin with the raw amino-acid sequence, 448 residues long: D-inositol 3-phosphate glycosyltransferase (448 aa).

1D-myo-inositol 3-phosphate contacts are provided by residues His35, Asp46 to Asn51, Lys104, Tyr137, Thr161, and Arg181. Gly49 contributes to the UDP-N-acetyl-alpha-D-glucosamine binding site. UDP-N-acetyl-alpha-D-glucosamine contacts are provided by Arg255, Lys260, and Met321. Residues Tyr330, Arg331, and Ala333 each contribute to the Mg(2+) site. The UDP-N-acetyl-alpha-D-glucosamine site is built by Glu343 and Glu351. Residue Thr357 coordinates Mg(2+).

It belongs to the glycosyltransferase group 1 family. MshA subfamily. In terms of assembly, homodimer.

It catalyses the reaction 1D-myo-inositol 3-phosphate + UDP-N-acetyl-alpha-D-glucosamine = 1D-myo-inositol 2-acetamido-2-deoxy-alpha-D-glucopyranoside 3-phosphate + UDP + H(+). Catalyzes the transfer of a N-acetyl-glucosamine moiety to 1D-myo-inositol 3-phosphate to produce 1D-myo-inositol 2-acetamido-2-deoxy-glucopyranoside 3-phosphate in the mycothiol biosynthesis pathway. The protein is D-inositol 3-phosphate glycosyltransferase of Acidothermus cellulolyticus (strain ATCC 43068 / DSM 8971 / 11B).